A 577-amino-acid chain; its full sequence is Arginine--tRNA ligase (577 aa).

Residues 122–132 carry the 'HIGH' region motif; the sequence is PNVAKEMHVGH.

This sequence belongs to the class-I aminoacyl-tRNA synthetase family. As to quaternary structure, monomer.

Its subcellular location is the cytoplasm. The catalysed reaction is tRNA(Arg) + L-arginine + ATP = L-arginyl-tRNA(Arg) + AMP + diphosphate. In Escherichia coli O6:K15:H31 (strain 536 / UPEC), this protein is Arginine--tRNA ligase.